Consider the following 271-residue polypeptide: Ribosomal RNA small subunit methyltransferase A (271 aa).

S-adenosyl-L-methionine-binding residues include asparagine 18, leucine 20, glycine 45, glutamate 66, aspartate 91, and asparagine 112.

It belongs to the class I-like SAM-binding methyltransferase superfamily. rRNA adenine N(6)-methyltransferase family. RsmA subfamily.

The protein resides in the cytoplasm. The enzyme catalyses adenosine(1518)/adenosine(1519) in 16S rRNA + 4 S-adenosyl-L-methionine = N(6)-dimethyladenosine(1518)/N(6)-dimethyladenosine(1519) in 16S rRNA + 4 S-adenosyl-L-homocysteine + 4 H(+). Specifically dimethylates two adjacent adenosines (A1518 and A1519) in the loop of a conserved hairpin near the 3'-end of 16S rRNA in the 30S particle. May play a critical role in biogenesis of 30S subunits. The protein is Ribosomal RNA small subunit methyltransferase A of Vibrio atlanticus (strain LGP32) (Vibrio splendidus (strain Mel32)).